Here is a 143-residue protein sequence, read N- to C-terminus: Large ribosomal subunit protein uL15 (143 aa).

Residues 1–57 (MQLNNLKPAAGSKHAKRRVGRGIGSGLGKTAGRGHKGQKSRSGGFHKVGFEGGQMPL) are disordered. Residues 21–31 (RGIGSGLGKTA) are compositionally biased toward gly residues.

It belongs to the universal ribosomal protein uL15 family. As to quaternary structure, part of the 50S ribosomal subunit.

Binds to the 23S rRNA. This is Large ribosomal subunit protein uL15 from Ralstonia pickettii (strain 12J).